The sequence spans 559 residues: Fanconi-associated nuclease 1 homolog (559 aa).

Mn(2+)-binding residues include E386, D507, E522, and V523. The 113-residue stretch at D443–W555 folds into the VRR-NUC domain.

It belongs to the FAN1 family. The cofactor is Mn(2+). Requires Mg(2+) as cofactor.

The enzyme catalyses Hydrolytically removes 5'-nucleotides successively from the 3'-hydroxy termini of 3'-hydroxy-terminated oligonucleotides.. Functionally, nuclease required for the repair of DNA interstrand cross-links (ICL). Acts as a 5'-3' exonuclease that anchors at a cut end of DNA and cleaves DNA successively at every third nucleotide, allowing to excise an ICL from one strand through flanking incisions. Also has endonuclease activity toward 5'-flaps. The protein is Fanconi-associated nuclease 1 homolog of Pseudomonas aeruginosa (strain ATCC 15692 / DSM 22644 / CIP 104116 / JCM 14847 / LMG 12228 / 1C / PRS 101 / PAO1).